Here is a 105-residue protein sequence, read N- to C-terminus: Small ribosomal subunit protein uS10 (105 aa).

Belongs to the universal ribosomal protein uS10 family. Part of the 30S ribosomal subunit.

Involved in the binding of tRNA to the ribosomes. The sequence is that of Small ribosomal subunit protein uS10 from Chlamydia muridarum (strain MoPn / Nigg).